Reading from the N-terminus, the 469-residue chain is Glutamate--tRNA ligase (469 aa).

The short motif at 11 to 21 (PSPTGFIHLGN) is the 'HIGH' region element. Positions 243-247 (KMSKR) match the 'KMSKS' region motif. Lysine 246 contributes to the ATP binding site.

It belongs to the class-I aminoacyl-tRNA synthetase family. Glutamate--tRNA ligase type 1 subfamily. In terms of assembly, monomer.

The protein localises to the cytoplasm. It catalyses the reaction tRNA(Glu) + L-glutamate + ATP = L-glutamyl-tRNA(Glu) + AMP + diphosphate. Catalyzes the attachment of glutamate to tRNA(Glu) in a two-step reaction: glutamate is first activated by ATP to form Glu-AMP and then transferred to the acceptor end of tRNA(Glu). This chain is Glutamate--tRNA ligase, found in Burkholderia orbicola (strain AU 1054).